The chain runs to 587 residues: Protein cereblon (587 aa).

3 disordered regions span residues 1 to 56 (MDEE…PAEY), 78 to 113 (DVLQ…GLPN), and 157 to 195 (FSQE…IDIG). Polar residues-rich tracts occupy residues 22-31 (EDQSQSQGLQ) and 86-96 (SEGSHPSSDMS). Residues 159-168 (QERRRSRTSE) show a composition bias toward basic and acidic residues. Residues 170 to 181 (TSQEEAAEEPDD) are compositionally biased toward acidic residues. Positions 182–191 (PPPQQPPLPP) are enriched in pro residues. The 227-residue stretch at 227–453 (HMLIFLHHHI…LIKSTFKDET (227 aa)) folds into the Lon N-terminal domain. The CULT domain maps to 452 to 561 (ETLFFCRYCN…LSGSSVRIGK (110 aa)). Zn(2+) contacts are provided by Cys-457, Cys-460, Cys-526, and Cys-529.

Belongs to the CRBN family. In terms of assembly, likely a component of a DCX (DDB1-CUL4-X-box) protein ligase complex. May interact with pic/DDB1. Ubiquitinated.

Its subcellular location is the nucleus. It participates in protein modification; protein ubiquitination. Functionally, substrate recognition component of a DCX (DDB1-CUL4-X-box) E3 protein ligase complex that mediates the ubiquitination and subsequent proteasomal degradation of target proteins. Has an essential role in mediating growth by negatively regulating insulin signaling. It also has a role in maintaining presynaptic function in the neuromuscular junction synapses of third-instar larvae. This is Protein cereblon from Drosophila simulans (Fruit fly).